The primary structure comprises 558 residues: Formate--tetrahydrofolate ligase (558 aa).

Residue 66 to 73 coordinates ATP; that stretch reads TPAGEGKT.

It belongs to the formate--tetrahydrofolate ligase family.

The enzyme catalyses (6S)-5,6,7,8-tetrahydrofolate + formate + ATP = (6R)-10-formyltetrahydrofolate + ADP + phosphate. It participates in one-carbon metabolism; tetrahydrofolate interconversion. The polypeptide is Formate--tetrahydrofolate ligase (Neisseria meningitidis serogroup C / serotype 2a (strain ATCC 700532 / DSM 15464 / FAM18)).